Here is a 107-residue protein sequence, read N- to C-terminus: Toluene 1,2-dioxygenase system ferredoxin subunit (107 aa).

One can recognise a Rieske domain in the interval T4–V99. [2Fe-2S] cluster-binding residues include C43, H45, C62, and H65.

Belongs to the bacterial ring-hydroxylating dioxygenase ferredoxin component family. As to quaternary structure, this dioxygenase system consists of four proteins: the two subunits of the hydroxylase component (todC1 and todC2), a ferredoxin (TodB) and a ferredoxin reductase (TodA).

It participates in xenobiotic degradation; toluene degradation. Its function is as follows. This protein seems to be a 2Fe-2S ferredoxin. This is Toluene 1,2-dioxygenase system ferredoxin subunit (todB) from Pseudomonas putida (strain ATCC 700007 / DSM 6899 / JCM 31910 / BCRC 17059 / LMG 24140 / F1).